The chain runs to 140 residues: Nucleoside diphosphate kinase (140 aa).

6 residues coordinate ATP: K11, F59, R87, T93, R104, and N114. H117 functions as the Pros-phosphohistidine intermediate in the catalytic mechanism.

It belongs to the NDK family. As to quaternary structure, homotetramer. Mg(2+) serves as cofactor.

Its subcellular location is the cytoplasm. The catalysed reaction is a 2'-deoxyribonucleoside 5'-diphosphate + ATP = a 2'-deoxyribonucleoside 5'-triphosphate + ADP. It catalyses the reaction a ribonucleoside 5'-diphosphate + ATP = a ribonucleoside 5'-triphosphate + ADP. Major role in the synthesis of nucleoside triphosphates other than ATP. The ATP gamma phosphate is transferred to the NDP beta phosphate via a ping-pong mechanism, using a phosphorylated active-site intermediate. The protein is Nucleoside diphosphate kinase of Bradyrhizobium sp. (strain BTAi1 / ATCC BAA-1182).